We begin with the raw amino-acid sequence, 146 residues long: Large ribosomal subunit protein uL15 (146 aa).

Positions 1 to 62 (MRLHELRPKT…GQMPLQERLP (62 aa)) are disordered. The segment covering 10 to 21 (TNYKKSRKRKGR) has biased composition (basic residues). Residues 42-52 (TGGGVRPGFEG) show a composition bias toward gly residues.

Belongs to the universal ribosomal protein uL15 family. As to quaternary structure, part of the 50S ribosomal subunit.

Its function is as follows. Binds to the 23S rRNA. In Natranaerobius thermophilus (strain ATCC BAA-1301 / DSM 18059 / JW/NM-WN-LF), this protein is Large ribosomal subunit protein uL15.